The following is a 241-amino-acid chain: Adenylate kinase 3 (241 aa).

38-43 (GCGKGT) is a binding site for ATP. The segment at 58–87 (ATGDMLRAAVAAKTPLGIKAKEAMDKGELV) is NMP. Residues T59, R64, 85 to 87 (ELV), 113 to 116 (GFPR), and Q120 contribute to the AMP site. The LID stretch occupies residues 154–191 (GRWIHPSSGRSYHTKFAPPKTPGLDDVTGEPLIQRKDD). R155 contacts ATP. The AMP site is built by R188 and R199.

The protein belongs to the adenylate kinase family.

The protein resides in the cytoplasm. The enzyme catalyses AMP + ATP = 2 ADP. Functionally, catalyzes the reversible transfer of the terminal phosphate group between ATP and AMP. Plays an important role in cellular energy homeostasis and in adenine nucleotide metabolism. This is Adenylate kinase 3 (ADK-A) from Oryza sativa subsp. japonica (Rice).